Consider the following 1091-residue polypeptide: ATP-dependent helicase/deoxyribonuclease subunit B (1091 aa).

It belongs to the helicase family. AddB/RexB type 2 subfamily. As to quaternary structure, heterodimer of AddA and RexB. Mg(2+) is required as a cofactor.

In terms of biological role, the heterodimer acts as both an ATP-dependent DNA helicase and an ATP-dependent, dual-direction single-stranded exonuclease. Recognizes the chi site generating a DNA molecule suitable for the initiation of homologous recombination. This subunit has 5' -&gt; 3' nuclease activity but not helicase activity. This Streptococcus pneumoniae (strain CGSP14) protein is ATP-dependent helicase/deoxyribonuclease subunit B.